Consider the following 252-residue polypeptide: MKWDEIGKNIAKEIEKEILPYFGRKDKSYVVGTSPSGDETEIFDKISEDIALKYLKSLNVNIVSEELGVIDNSSEWTVVIDPIDGSFNFINGIPFFAFCFGVFKNNEPYYGLTYEFLTKSFYEAYKGKGAYLNGRKIKVKDFNPNNIVISYYPSKKIDLEKLRNKVKRVRIFGAFGLEMCYVAKGTLDAVFDVRPKVRAVDIASSYIICKEAGALITDENGDELKFDLNATDRLNIIVANSKEMLDIILDLL.

Mg(2+)-binding residues include Glu-65, Asp-81, Ile-83, and Asp-84. Residues Asp-84–Ser-86, Arg-170, Phe-175, and Arg-194 contribute to the substrate site. Asp-201 serves as a coordination point for Mg(2+).

The protein belongs to the inositol monophosphatase superfamily. FBPase class 4 family. As to quaternary structure, homodimer. Mg(2+) is required as a cofactor.

It carries out the reaction beta-D-fructose 1,6-bisphosphate + H2O = beta-D-fructose 6-phosphate + phosphate. The catalysed reaction is a myo-inositol phosphate + H2O = myo-inositol + phosphate. Its activity is regulated as follows. IMPase activity is inhibited by Ca(2+) and Zn(2+). In contrast to mammalian I-1-P phosphatases, is not inhibited by Li(+) up to 100 mM. Functionally, phosphatase with broad specificity; it can dephosphorylate fructose 1,6-bisphosphate, both D and L isomers of inositol-1-phosphate (I-1-P), 2'-AMP, pNPP, beta-glycerol phosphate, and alpha-D-glucose-1-phosphate. Cannot hydrolyze glucose-6-phosphate, fructose-6-phosphate, NAD(+) or 5'-AMP. May be involved in the biosynthesis of a unique osmolyte, di-myo-inositol 1,1-phosphate. The polypeptide is Fructose-1,6-bisphosphatase/inositol-1-monophosphatase (suhB) (Methanocaldococcus jannaschii (strain ATCC 43067 / DSM 2661 / JAL-1 / JCM 10045 / NBRC 100440) (Methanococcus jannaschii)).